The primary structure comprises 299 residues: Protoheme IX farnesyltransferase 1 (299 aa).

The next 8 helical transmembrane spans lie at 25-45, 47-67, 95-115, 119-139, 147-167, 173-193, 226-246, and 279-299; these read VVVL…RAGV, WTVL…AAAV, TGAL…LLTF, LTAW…TGFL, IVIG…AATG, PLLL…ALAI, ALLA…LYLI, and IWYL…LLNL.

Belongs to the UbiA prenyltransferase family. Protoheme IX farnesyltransferase subfamily.

It localises to the cell inner membrane. It catalyses the reaction heme b + (2E,6E)-farnesyl diphosphate + H2O = Fe(II)-heme o + diphosphate. The protein operates within porphyrin-containing compound metabolism; heme O biosynthesis; heme O from protoheme: step 1/1. Functionally, converts heme B (protoheme IX) to heme O by substitution of the vinyl group on carbon 2 of heme B porphyrin ring with a hydroxyethyl farnesyl side group. The chain is Protoheme IX farnesyltransferase 1 from Pseudomonas fluorescens (strain Pf0-1).